The sequence spans 491 residues: Cytochrome P450 2F2 (491 aa).

A heme-binding site is contributed by Cys436.

It belongs to the cytochrome P450 family. It depends on heme as a cofactor.

It is found in the endoplasmic reticulum membrane. It localises to the microsome membrane. In terms of biological role, involved in the regio- and stereoselective transformation of naphthalene to trans-1R-hydroxy-2R-glutathionyl-1,2-dihydronaphthalene in the presence of glutathione and glutathione S-transferases. It specifically catalyzes the production of a very reactive and potentially toxic intermediate, the 2R,2S arene oxide, that is associated with necrosis of the unciliated bronchiolar epithelial cells or club cells in lung. The chain is Cytochrome P450 2F2 (Cyp2f2) from Rattus norvegicus (Rat).